A 155-amino-acid polypeptide reads, in one-letter code: 6,7-dimethyl-8-ribityllumazine synthase (155 aa).

5-amino-6-(D-ribitylamino)uracil is bound by residues F23, 57–59, and 81–83; these read AFE and AVI. Position 86 to 87 (86 to 87) interacts with (2S)-2-hydroxy-3-oxobutyl phosphate; that stretch reads ST. H89 (proton donor) is an active-site residue. F114 lines the 5-amino-6-(D-ribitylamino)uracil pocket. (2S)-2-hydroxy-3-oxobutyl phosphate is bound at residue R128.

The protein belongs to the DMRL synthase family.

It catalyses the reaction (2S)-2-hydroxy-3-oxobutyl phosphate + 5-amino-6-(D-ribitylamino)uracil = 6,7-dimethyl-8-(1-D-ribityl)lumazine + phosphate + 2 H2O + H(+). It participates in cofactor biosynthesis; riboflavin biosynthesis; riboflavin from 2-hydroxy-3-oxobutyl phosphate and 5-amino-6-(D-ribitylamino)uracil: step 1/2. Functionally, catalyzes the formation of 6,7-dimethyl-8-ribityllumazine by condensation of 5-amino-6-(D-ribitylamino)uracil with 3,4-dihydroxy-2-butanone 4-phosphate. This is the penultimate step in the biosynthesis of riboflavin. This chain is 6,7-dimethyl-8-ribityllumazine synthase, found in Geobacter metallireducens (strain ATCC 53774 / DSM 7210 / GS-15).